Reading from the N-terminus, the 189-residue chain is Interferon alpha-1 (189 aa).

An N-terminal signal peptide occupies residues Met1–Gly23. Intrachain disulfides connect Cys24/Cys122 and Cys52/Cys162.

This sequence belongs to the alpha/beta interferon family. In terms of assembly, interacts with CR2.

The protein localises to the secreted. Functionally, produced by macrophages, IFN-alpha have antiviral activities. Interferon stimulates the production of two enzymes: a protein kinase and an oligoadenylate synthetase. This is Interferon alpha-1 from Sus scrofa (Pig).